We begin with the raw amino-acid sequence, 658 residues long: MSELLLELFSEEIPAFIQKDAEEGYLSIFTKIFEENEIFAKIQVFSGPRRITLYATHLPKVTLPKEIEIKGPSTEAPEAAINGFCKAHNVSKLELSTKLINNQLYYFYIKKVEERQIKEILPEIIVEAINKYSWAKSMFWGNYNIKWIRPLRNILCIFDSEILPLQFGHLAANNVTFGHRLTDNKKLEVTDFEDYKTKLTENYVILERLKREEIIKTSLLEQANSHNLTIKEDLRLIEEVAGLSEFPVVLCGAIPQKFLELPKEVLISSMRTHQKYFCLFDRSENFAPYFLFVSNGQFANSKLVVQGNEKVLSARLSDALYFYKQDISKTLEANLEKLAAVTFHTKLGSLKEKVERITNICKYIDPDNKDLITAAKLCKSDLVSEMVGEFPELQGIMGYYYAKHENLNEEIAVAIRDHYKPQGLSDSVPVGNAALLAIADKLDSLVGLMIAGEAPTGSGDPYALRRQVLGIIRIIIENKLELNLNSLIDFSLKLYSSDKDKDLIISFFEERAKFYFKNEYDISLINAVLDLNLANIKFKLDALKEFLEKEDGKQLLNAYKRASNILGSQNIDGAVEPSLFNTQPEKELFEVTQKLSLQIVDKDYDKALNLLQTLLTPITSFFDNVLVNDSDPKIAKNRLLILQDVCKLFHKIAKFNRL.

This sequence belongs to the class-II aminoacyl-tRNA synthetase family. As to quaternary structure, tetramer of two alpha and two beta subunits.

The protein localises to the cytoplasm. It catalyses the reaction tRNA(Gly) + glycine + ATP = glycyl-tRNA(Gly) + AMP + diphosphate. In Rickettsia bellii (strain OSU 85-389), this protein is Glycine--tRNA ligase beta subunit.